The following is a 277-amino-acid chain: MNDNDNIDKDNIDTMNDNNKLIIGLDEAGRGPVLGPMVIALVKIKGQDLKNFEKLDIKDSKKHSKNRREELFEMIINNYDVRYEILEAKTIDKLMNTINLNKIELMAFTKLINSVLKEEYPNYKENSKIQTATPQIEIYIDACSSNEKAFANQIKSKLIVNDENNIKIIAEHKADENYKIVSAASIIAKVIRDRKIEEYKKIYGEIGSGYPSDKITQKYLANYVEKNRELPEIARKSWNTSKKLLKKIEDKNTVDKIKDSKRIKTNIELKQTKLVEF.

The region spanning 20 to 250 is the RNase H type-2 domain; that stretch reads KLIIGLDEAG…SKKLLKKIED (231 aa). A divalent metal cation-binding residues include Asp-26, Glu-27, and Asp-141.

It belongs to the RNase HII family. It depends on Mn(2+) as a cofactor. Mg(2+) is required as a cofactor.

Its subcellular location is the cytoplasm. The enzyme catalyses Endonucleolytic cleavage to 5'-phosphomonoester.. In terms of biological role, endonuclease that specifically degrades the RNA of RNA-DNA hybrids. This is Ribonuclease HII from Methanococcus aeolicus (strain ATCC BAA-1280 / DSM 17508 / OCM 812 / Nankai-3).